The following is a 465-amino-acid chain: Serine carboxypeptidase-like 46 (465 aa).

An N-terminal signal peptide occupies residues Met1 to Ser25. Disulfide bonds link Cys88-Cys344, Cys245-Cys263, and Cys288-Cys313. 2 N-linked (GlcNAc...) asparagine glycosylation sites follow: Asn137 and Asn170. Residue Ser179 is part of the active site. Asn246 carries N-linked (GlcNAc...) asparagine glycosylation. Residues Asp381 and His438 contribute to the active site.

It belongs to the peptidase S10 family. As to expression, ubiquitous.

It is found in the secreted. Probable carboxypeptidase. This Arabidopsis thaliana (Mouse-ear cress) protein is Serine carboxypeptidase-like 46 (SCPL46).